The primary structure comprises 555 residues: Methionine--tRNA ligase (555 aa).

The 'HIGH' region signature appears at 13-23; sequence PYANGSLHIGH. Positions 144, 147, 157, and 160 each coordinate Zn(2+). The 'KMSKS' region signature appears at 330 to 334; sequence KISKS. Position 333 (K333) interacts with ATP.

Belongs to the class-I aminoacyl-tRNA synthetase family. MetG type 1 subfamily. As to quaternary structure, monomer. Zn(2+) is required as a cofactor.

The protein resides in the cytoplasm. The catalysed reaction is tRNA(Met) + L-methionine + ATP = L-methionyl-tRNA(Met) + AMP + diphosphate. Is required not only for elongation of protein synthesis but also for the initiation of all mRNA translation through initiator tRNA(fMet) aminoacylation. The chain is Methionine--tRNA ligase from Blochmanniella pennsylvanica (strain BPEN).